A 339-amino-acid chain; its full sequence is Dihydroorotate dehydrogenase (quinone) (339 aa).

FMN-binding positions include Ala64–Lys68 and Thr88. A substrate-binding site is contributed by Lys68. Residue Asn113–Phe117 coordinates substrate. 2 residues coordinate FMN: Asn141 and Asn174. Asn174 is a binding site for substrate. Ser177 functions as the Nucleophile in the catalytic mechanism. Asn179 is a binding site for substrate. FMN-binding residues include Lys219 and Thr247. Asn248–Thr249 contributes to the substrate binding site. Residues Gly270, Gly299, and Tyr320–Ser321 contribute to the FMN site.

This sequence belongs to the dihydroorotate dehydrogenase family. Type 2 subfamily. In terms of assembly, monomer. It depends on FMN as a cofactor.

The protein localises to the cell membrane. It carries out the reaction (S)-dihydroorotate + a quinone = orotate + a quinol. It functions in the pathway pyrimidine metabolism; UMP biosynthesis via de novo pathway; orotate from (S)-dihydroorotate (quinone route): step 1/1. Functionally, catalyzes the conversion of dihydroorotate to orotate with quinone as electron acceptor. The protein is Dihydroorotate dehydrogenase (quinone) (pyrD) of Haemophilus influenzae (strain ATCC 51907 / DSM 11121 / KW20 / Rd).